Here is a 480-residue protein sequence, read N- to C-terminus: MASEKVETIVAGNYVEMEREGAATAGEGVGGAAAASGRRRGKLAVSSLFWHGGSVYDAWFSCASNQVAQVLLTLPYSFSQLGMASGVAFQVFYGLMGSWTAYLISVLYVEYRTRRERDKVDFRNHVIQWFEVLDGLLGRHWRNAGLLFNCTFLLFGSVIQLIACASNIYYINDRLDKRTWTYIFGACCATTVFVPSFHNYRVWSFLGLLMTSYTAWYLTVAAVVHGKVDGAAPRAGPSKTMVLYFTGATNILYTFGGHAVTVEIMHAMWRPRRFKMIYLAATAYVLTLTLPSAAAMYWAFGDALLDHSNAFALLPRTPWRDAAVVLMLIHQFITFGFACTPLYFVWEKAIGVHGGAGVLRRAAARLPVVLPIWFLAVIFPFFGPINSTVGSFLVSFTVYIIPAMAHMATFAPAAARENAVEPPPRALGGWPGTFAANCFVVAWVLVVGFGFGGWASTVNFVRQVDTFGLFTKCYQCPPRH.

The Cytoplasmic segment spans residues 1–66; it reads MASEKVETIV…DAWFSCASNQ (66 aa). A helical membrane pass occupies residues 67–84; that stretch reads VAQVLLTLPYSFSQLGMA. Topologically, residues 85-86 are extracellular; it reads SG. The chain crosses the membrane as a helical span at residues 87–107; the sequence is VAFQVFYGLMGSWTAYLISVL. Residues 108 to 143 lie on the Cytoplasmic side of the membrane; that stretch reads YVEYRTRRERDKVDFRNHVIQWFEVLDGLLGRHWRN. A helical membrane pass occupies residues 144–164; the sequence is AGLLFNCTFLLFGSVIQLIAC. At 165 to 179 the chain is on the extracellular side; the sequence is ASNIYYINDRLDKRT. Residues 180–200 traverse the membrane as a helical segment; the sequence is WTYIFGACCATTVFVPSFHNY. The Cytoplasmic portion of the chain corresponds to 201 to 203; that stretch reads RVW. Residues 204 to 224 traverse the membrane as a helical segment; that stretch reads SFLGLLMTSYTAWYLTVAAVV. Residues 225–241 are Extracellular-facing; it reads HGKVDGAAPRAGPSKTM. Residues 242 to 262 form a helical membrane-spanning segment; sequence VLYFTGATNILYTFGGHAVTV. Over 263 to 275 the chain is Cytoplasmic; that stretch reads EIMHAMWRPRRFK. A helical membrane pass occupies residues 276-296; the sequence is MIYLAATAYVLTLTLPSAAAM. The Extracellular segment spans residues 297 to 323; it reads YWAFGDALLDHSNAFALLPRTPWRDAA. The helical transmembrane segment at 324-344 threads the bilayer; sequence VVLMLIHQFITFGFACTPLYF. Topologically, residues 345–365 are cytoplasmic; that stretch reads VWEKAIGVHGGAGVLRRAAAR. Residues 366–386 traverse the membrane as a helical segment; that stretch reads LPVVLPIWFLAVIFPFFGPIN. Residue Ser387 is a topological domain, extracellular. The chain crosses the membrane as a helical span at residues 388 to 408; it reads TVGSFLVSFTVYIIPAMAHMA. Residues 409 to 433 lie on the Cytoplasmic side of the membrane; it reads TFAPAAARENAVEPPPRALGGWPGT. The chain crosses the membrane as a helical span at residues 434-454; the sequence is FAANCFVVAWVLVVGFGFGGW. Topologically, residues 455–480 are extracellular; the sequence is ASTVNFVRQVDTFGLFTKCYQCPPRH.

The protein belongs to the amino acid/polyamine transporter 2 family. Amino acid/auxin permease (AAAP) (TC 2.A.18.1) subfamily.

It localises to the cell membrane. Functionally, carrier protein involved in proton-driven auxin influx. May mediate the formation of auxin gradient from developing leaves (site of auxin biosynthesis) to tips. In Oryza sativa subsp. japonica (Rice), this protein is Putative auxin transporter-like protein 4.